Reading from the N-terminus, the 157-residue chain is Small ribosomal subunit protein uS7 (157 aa).

The protein belongs to the universal ribosomal protein uS7 family. Part of the 30S ribosomal subunit. Contacts proteins S9 and S11.

Its function is as follows. One of the primary rRNA binding proteins, it binds directly to 16S rRNA where it nucleates assembly of the head domain of the 30S subunit. Is located at the subunit interface close to the decoding center, probably blocks exit of the E-site tRNA. This Stenotrophomonas maltophilia (strain R551-3) protein is Small ribosomal subunit protein uS7.